The sequence spans 119 residues: MNPEEIRQRRLQEMQAKAQAQGAANDPEAQRQMQEQQMQYEMQKQKILRQILSEEARSRLARIKLAKPQFAEQVEMQLIQLAQAGKLPVPLTDEYFKGLLDKIYEMNRPAKKEITIMRK.

Basic and acidic residues predominate over residues 1-12; the sequence is MNPEEIRQRRLQ. Residues 1-35 form a disordered region; it reads MNPEEIRQRRLQEMQAKAQAQGAANDPEAQRQMQE.

Belongs to the PDCD5 family.

The sequence is that of DNA-binding protein MMP0157 from Methanococcus maripaludis (strain DSM 14266 / JCM 13030 / NBRC 101832 / S2 / LL).